Reading from the N-terminus, the 540-residue chain is Chaperonin GroEL 2 (540 aa).

Residues 29–32 (TMGP), lysine 50, 86–90 (DGTTT), glycine 414, and aspartate 496 contribute to the ATP site.

Belongs to the chaperonin (HSP60) family. Forms a cylinder of 14 subunits composed of two heptameric rings stacked back-to-back. Interacts with the co-chaperonin GroES.

It is found in the cytoplasm. The catalysed reaction is ATP + H2O + a folded polypeptide = ADP + phosphate + an unfolded polypeptide.. In terms of biological role, together with its co-chaperonin GroES, plays an essential role in assisting protein folding. The GroEL-GroES system forms a nano-cage that allows encapsulation of the non-native substrate proteins and provides a physical environment optimized to promote and accelerate protein folding. In Rhodopirellula baltica (strain DSM 10527 / NCIMB 13988 / SH1), this protein is Chaperonin GroEL 2.